The chain runs to 139 residues: MHRLRVTDPVVQGKLEESDSTHELVKRLEILPQNNMTPEEYTLMKRNYLVFLIAQYNFDQYIETTHGIKRKKHIEGLKANLKPSALSADSASLSGLLSTSLTTPSLSSTPTSLTSMPGLSISGPSTTDTIDSKKKPKAK.

Residues 100–120 show a composition bias toward low complexity; sequence SLTTPSLSSTPTSLTSMPGLS. A disordered region spans residues 100–139; that stretch reads SLTTPSLSSTPTSLTSMPGLSISGPSTTDTIDSKKKPKAK.

It belongs to the herpesviridae small capsomere-interacting protein family. As to quaternary structure, interacts with the major capsid protein/MCP.

It is found in the virion. The protein localises to the host nucleus. Participates in the assembly of the infectious particles by decorating the outer surface of the capsid shell and thus forming a layer between the capsid and the tegument. Complexes composed of the major capsid protein and small capsomere-interacting protein/SCP assemble together in the host cytoplasm and are translocated to the nucleus, where they accumulate and participate in capsid assembly. This chain is Small capsomere-interacting protein, found in Saimiri sciureus (Common squirrel monkey).